Here is a 401-residue protein sequence, read N- to C-terminus: Exodeoxyribonuclease 7 large subunit (401 aa).

This sequence belongs to the XseA family. In terms of assembly, heterooligomer composed of large and small subunits.

The protein localises to the cytoplasm. It catalyses the reaction Exonucleolytic cleavage in either 5'- to 3'- or 3'- to 5'-direction to yield nucleoside 5'-phosphates.. Functionally, bidirectionally degrades single-stranded DNA into large acid-insoluble oligonucleotides, which are then degraded further into small acid-soluble oligonucleotides. The chain is Exodeoxyribonuclease 7 large subunit from Clostridioides difficile (strain 630) (Peptoclostridium difficile).